A 241-amino-acid polypeptide reads, in one-letter code: Homeobox protein TGIF2LX (241 aa).

2 disordered regions span residues 1–58 (MEAA…GNLP) and 125–207 (KTGK…ELVS). Polar residues predominate over residues 10 to 39 (ETQSPVQKDSPAKTQSPAQDTSIMSRNNAD). A DNA-binding region (homeobox; TALE-type) is located at residues 48–111 (EHKKKRKGNL…INARRRILPD (64 aa)).

This sequence belongs to the TALE/TGIF homeobox family.

It localises to the nucleus. In terms of biological role, may have a transcription role in testis. This is Homeobox protein TGIF2LX (TGIF2LX) from Pan troglodytes (Chimpanzee).